A 475-amino-acid polypeptide reads, in one-letter code: Glycogen synthase (475 aa).

Lys15 contributes to the ADP-alpha-D-glucose binding site.

This sequence belongs to the glycosyltransferase 1 family. Bacterial/plant glycogen synthase subfamily.

It carries out the reaction [(1-&gt;4)-alpha-D-glucosyl](n) + ADP-alpha-D-glucose = [(1-&gt;4)-alpha-D-glucosyl](n+1) + ADP + H(+). It participates in glycan biosynthesis; glycogen biosynthesis. In terms of biological role, synthesizes alpha-1,4-glucan chains using ADP-glucose. In Anaeromyxobacter sp. (strain K), this protein is Glycogen synthase.